Here is a 141-residue protein sequence, read N- to C-terminus: Putative pre-16S rRNA nuclease (141 aa).

The protein belongs to the YqgF nuclease family.

The protein resides in the cytoplasm. In terms of biological role, could be a nuclease involved in processing of the 5'-end of pre-16S rRNA. This Histophilus somni (strain 129Pt) (Haemophilus somnus) protein is Putative pre-16S rRNA nuclease.